We begin with the raw amino-acid sequence, 399 residues long: Fructose-1,6-bisphosphate aldolase/phosphatase (399 aa).

Asp-11 (proton acceptor; for FBP phosphatase activity) is an active-site residue. Residues Asp-11, His-18, Asp-52, and Asp-53 each contribute to the Mg(2+) site. His-18 contributes to the beta-D-fructose 1,6-bisphosphate binding site. Dihydroxyacetone phosphate is bound at residue His-18. Residue Tyr-91 coordinates beta-D-fructose 1,6-bisphosphate. Gln-95 contacts Mg(2+). 104–105 is a beta-D-fructose 1,6-bisphosphate binding site; sequence GN. Residue Asp-132 coordinates Mg(2+). Lys-133 contributes to the beta-D-fructose 1,6-bisphosphate binding site. Lys-133 lines the dihydroxyacetone phosphate pocket. The Proton donor/acceptor; for FBP aldolase activity role is filled by Tyr-229. Lys-232, Asp-233, and Asp-234 together coordinate Mg(2+). The active-site Schiff-base intermediate with DHAP; for FBP aldolase activity is Lys-232. Beta-D-fructose 1,6-bisphosphate contacts are provided by residues 242 to 243, Arg-266, Asp-297, and Tyr-358; that span reads QS. 2 residues coordinate dihydroxyacetone phosphate: Arg-266 and Asp-297.

The protein belongs to the FBP aldolase/phosphatase family. In terms of assembly, homooctamer; dimer of tetramers. Requires Mg(2+) as cofactor.

The enzyme catalyses beta-D-fructose 1,6-bisphosphate + H2O = beta-D-fructose 6-phosphate + phosphate. It carries out the reaction beta-D-fructose 1,6-bisphosphate = D-glyceraldehyde 3-phosphate + dihydroxyacetone phosphate. The protein operates within carbohydrate biosynthesis; gluconeogenesis. In terms of biological role, catalyzes two subsequent steps in gluconeogenesis: the aldol condensation of dihydroxyacetone phosphate (DHAP) and glyceraldehyde-3-phosphate (GA3P) to fructose-1,6-bisphosphate (FBP), and the dephosphorylation of FBP to fructose-6-phosphate (F6P). The chain is Fructose-1,6-bisphosphate aldolase/phosphatase from Pyrobaculum neutrophilum (strain DSM 2338 / JCM 9278 / NBRC 100436 / V24Sta) (Thermoproteus neutrophilus).